Here is a 133-residue protein sequence, read N- to C-terminus: ATP synthase epsilon chain, chloroplastic (133 aa).

This sequence belongs to the ATPase epsilon chain family. F-type ATPases have 2 components, CF(1) - the catalytic core - and CF(0) - the membrane proton channel. CF(1) has five subunits: alpha(3), beta(3), gamma(1), delta(1), epsilon(1). CF(0) has three main subunits: a, b and c.

It is found in the plastid. The protein resides in the chloroplast thylakoid membrane. In terms of biological role, produces ATP from ADP in the presence of a proton gradient across the membrane. This Ipomoea batatas (Sweet potato) protein is ATP synthase epsilon chain, chloroplastic.